The following is a 178-amino-acid chain: MTTDTHTLHIEEILDLLPHRFPFLLVDRVLDFEEGKFLRAVKNVSFNEPFFQGHFPGKPIFPGVLILEAMAQATGILAFKSRGKLEPGELYYFAGIDEARFKRPVVPGDQMIMEVEFVKERRGLTRFTGVAKVDGEIVCTATMMCARSKPATAVVIKSEVTKSEGTKSEVGKPDVKES.

Histidine 54 is an active-site residue.

The protein belongs to the thioester dehydratase family. FabZ subfamily.

The protein localises to the cytoplasm. It catalyses the reaction a (3R)-hydroxyacyl-[ACP] = a (2E)-enoyl-[ACP] + H2O. Its function is as follows. Involved in unsaturated fatty acids biosynthesis. Catalyzes the dehydration of short chain beta-hydroxyacyl-ACPs and long chain saturated and unsaturated beta-hydroxyacyl-ACPs. This Yersinia enterocolitica protein is 3-hydroxyacyl-[acyl-carrier-protein] dehydratase FabZ.